We begin with the raw amino-acid sequence, 257 residues long: Imidazole glycerol phosphate synthase subunit HisF (257 aa).

Catalysis depends on residues Asp11 and Asp130.

Belongs to the HisA/HisF family. As to quaternary structure, heterodimer of HisH and HisF.

It is found in the cytoplasm. It carries out the reaction 5-[(5-phospho-1-deoxy-D-ribulos-1-ylimino)methylamino]-1-(5-phospho-beta-D-ribosyl)imidazole-4-carboxamide + L-glutamine = D-erythro-1-(imidazol-4-yl)glycerol 3-phosphate + 5-amino-1-(5-phospho-beta-D-ribosyl)imidazole-4-carboxamide + L-glutamate + H(+). It functions in the pathway amino-acid biosynthesis; L-histidine biosynthesis; L-histidine from 5-phospho-alpha-D-ribose 1-diphosphate: step 5/9. Its function is as follows. IGPS catalyzes the conversion of PRFAR and glutamine to IGP, AICAR and glutamate. The HisF subunit catalyzes the cyclization activity that produces IGP and AICAR from PRFAR using the ammonia provided by the HisH subunit. The protein is Imidazole glycerol phosphate synthase subunit HisF of Prochlorococcus marinus (strain MIT 9515).